Consider the following 552-residue polypeptide: Protein FAM234A (552 aa).

The interval 1 to 40 is disordered; the sequence is MMDDKDLEAEIHPLKNEDKKSQENLGNLPKTEDNLKNKPV. Residues 1-49 lie on the Cytoplasmic side of the membrane; that stretch reads MMDDKDLEAEIHPLKNEDKKSQENLGNLPKTEDNLKNKPVPSRLSRCRT. Residues 8 to 22 are compositionally biased toward basic and acidic residues; the sequence is EAEIHPLKNEDKKSQ. S21 carries the phosphoserine modification. The helical; Signal-anchor for type II membrane protein transmembrane segment at 50–70 threads the bilayer; sequence VAFFLSLFICLFVVFVLSFII. Over 71–552 the chain is Extracellular; the sequence is PCPDRPSSED…FSRLRYRSEV (482 aa). Residues N116, N119, N314, and N473 are each glycosylated (N-linked (GlcNAc...) asparagine).

This sequence belongs to the FAM234 family.

It is found in the membrane. This chain is Protein FAM234A (Fam234a), found in Rattus norvegicus (Rat).